A 292-amino-acid chain; its full sequence is Poly(U)-specific endoribonuclease-B (292 aa).

One can recognise an EndoU domain in the interval 8-285 (VNHELSKLFN…IGTAYPALLS (278 aa)). Active-site residues include His162, His178, and Lys224.

This sequence belongs to the ENDOU family. Monomer. The cofactor is Mn(2+).

The protein localises to the nucleus. It carries out the reaction uridylyl-uridylyl-ribonucleotide-RNA = a 3'-end uridylyl-2',3'-cyclophospho-uridine-RNA + a 5'-end dephospho-ribonucleoside-RNA. Poly(U)-specific endoribonuclease involved in the processing of intron-encoded box C/D snoRNAs, such as U16 and U86. Releases products that have 2',3'-cyclic phosphate termini at the 3'-end. This Xenopus laevis (African clawed frog) protein is Poly(U)-specific endoribonuclease-B (endou-b).